We begin with the raw amino-acid sequence, 867 residues long: Protein argonaute-3 (867 aa).

The necessary and sufficient for interaction with krimp stretch occupies residues 1-83 (MSGRGNLLSL…IDTLKTDDHT (83 aa)). The segment at 1–289 (MSGRGNLLSL…CDVSHRILCQ (289 aa)) is interaction with papi. Symmetric dimethylarginine is present on residues R4, R68, and R70. The 112-residue stretch at 291–402 (TVLEMLVDLY…LIPELCYLTG (112 aa)) folds into the PAZ domain. Residues 566–853 (MVVCICHNRR…LAYLIGQSIQ (288 aa)) form the Piwi domain.

The protein belongs to the argonaute family. Piwi subfamily. Component of the ping-pong piRNA processing (4P) complex consisting of krimp, aub and AGO3. Interacts (via N-terminus when not methylated on arginine residues) with krimp (via non-canonical tudor domain); this interaction leads to symmetrical dimethylation on AGO3 arginine residues and its subsequent dissociation from krimp. Krimp associated AGO3 is mostly free of piRNA binding and the interaction plays an important role in the loading of AGO3 with piRNAs; piRNA binding may stimulate dissociation of the two proteins. May form part of a piRNA processing complex consisting of tud, aub and AGO3. Interacts (when symmetrically dimethylated on arginine residues) with tud. Forms a complex with smg, twin, aub, nos mRNA and piRNAs that target the nos 3'-untranslated region, in early embryos. Interacts (via the N-terminal region when symmetrically methylated on arginine residues) with papi (via C-terminus); this interaction is RNA-independent and may be required for AGO3 localization to the nuage. Interacts with TER94 and tral. Symmetrically dimethylated on Arg-4, Arg-68 and Arg-70, most likely by csul/PRMT5/DART5. Methylation state probably functions as an indicator of its piRNA binding state. In terms of tissue distribution, in ovary, expressed in germline stem cells, germline cyst cells, nurse cells and oocytes during early stages. Also found in the somatic cap cells of the germarium. In testis, expressed in germline stem cells, primary gonial cells and early spermatocytes. No expression detected in the somatic hub cells at the apical tip of the testis (at protein level). Expressed in neurons throughout the adult brain and in the mushroom body subdivision in the peduncle. In the mushroom body, expressed only in gamma and core alpha-beta neurons.

It localises to the cytoplasm. Its subcellular location is the perinuclear region. It is found in the cytoplasmic ribonucleoprotein granule. Component of the perinuclear meiotic nuage, a germline-specific subcellular membraneless ribonucleoprotein compartment involved in production of transposable element-repressing Piwi-interacting RNA (piRNA)-induced silencing complexes (piRISCs), which are essential for maintaining germline integrity during oogenesis. Acts via the Piwi-interacting RNA (piRNA) metabolic process, which mediates the repression of transposable elements during meiosis by forming complexes composed of piRNAs and Piwi proteins and governs the methylation and subsequent repression of transposons. Piwi protein that directly binds piRNAs, a class of 24 to 30 nucleotide RNAs that are generated by a Dicer-independent mechanism and are primarily derived from transposons and other repeated sequence elements. Associates predominantly with sense piRNAs that contain adenine at nucleotide 10, but shows no preference for uridine at the 5' end. Shows RNA cleavage or slicer activity. Together with Piwi protein aub recruited to subregions of the perinuclear nuage by krimp, which coordinates their activity in the ping-pong amplification step of secondary piRNA biogenesis. Krimp recruits piRNA bound aub and unbound AGO3, bringing them into close proximity to facilitate the loading onto AGO3 of freshly cut piRNAs generated by aub cleavage of target sequences; krimp recognizes the piRNA loading state of the Piwi proteins via symmetrically dimethylated arginine modification in their N-terminus. Important for asymmetric ping-pong amplification to bias production towards antisense piRNAs capable of silencing transposable elements. In testis, associates with Su(Ste) and AT-chX-1 piRNAs mostly produced from antisense precursors. In the germline, acts to amplify pools of antisense piRNAs, among others Su(Ste), AT-chX-1 and roo, and to limit sense piRNA accumulation. Forms a complex with smg, twin, aub and specific piRNAs that targets nos mRNA (and probably other maternal mRNAS) for deadenylation promoting its decay during early embryogenesis. Involved in transposon silencing in the adult brain. In Drosophila melanogaster (Fruit fly), this protein is Protein argonaute-3.